The primary structure comprises 108 residues: MSDTEYLARAEAVLAAVERTVDVANDGDHDIDLERNGSVLTLTFENGSKIIVNLQPPMKEVWIAAKAGGFHYRFIDGEWRDTRTGTEFFSALTEYATQQAGLPITFSA.

It belongs to the frataxin family.

Functionally, involved in iron-sulfur (Fe-S) cluster assembly. May act as a regulator of Fe-S biogenesis. This chain is Iron-sulfur cluster assembly protein CyaY, found in Burkholderia orbicola (strain MC0-3).